A 322-amino-acid chain; its full sequence is Putative A-type inclusion protein (322 aa).

The disordered stretch occupies residues 284–322 (LTTEATGSVEVAPPSTDVTEPISDVTPSVDVEPEHPPAF).

This sequence belongs to the chordopoxvirinae A26 protein family.

Its function is as follows. Encodes a truncated version of poxvirus A26 protein. This Vaccinia virus (strain Copenhagen) (VACV) protein is Putative A-type inclusion protein.